The chain runs to 614 residues: V-type proton ATPase catalytic subunit A (614 aa).

Position 247-254 (247-254 (GAFGCGKT)) interacts with ATP.

It belongs to the ATPase alpha/beta chains family. As to quaternary structure, V-ATPase is a heteromultimeric enzyme made up of two complexes: the ATP-hydrolytic V1 complex and the proton translocation V0 complex. The V1 complex consists of three catalytic AB heterodimers that form a heterohexamer, three peripheral stalks each consisting of EG heterodimers, one central rotor including subunits D and F, and the regulatory subunits C and H. The proton translocation complex V0 consists of the proton transport subunit a, a ring of proteolipid subunits c9c'', rotary subunit d, subunits e and f, and the accessory subunits VhaAC45 and ATP6AP2.

It catalyses the reaction ATP + H2O + 4 H(+)(in) = ADP + phosphate + 5 H(+)(out). ATP hydrolysis occurs at the interface between the nucleotide-binding domains of subunits A and B. ATP hydrolysis triggers a conformational change in the subunits D and F, which induces a shift of subunit d. The c-ring is subsequently rotated and results in a continuous proton translocation across the membrane. Its function is as follows. Catalytic subunit of the V1 complex of vacuolar(H+)-ATPase (V-ATPase), a multisubunit enzyme composed of a peripheral complex (V1) that hydrolyzes ATP and a membrane integral complex (V0) that translocates protons. V-ATPase is responsible for acidifying and maintaining the pH of intracellular compartments and in some cell types, is targeted to the plasma membrane, where it is responsible for acidifying the extracellular environment. This Aedes aegypti (Yellowfever mosquito) protein is V-type proton ATPase catalytic subunit A (VhaA).